The sequence spans 90 residues: Putative Fis-like DNA-binding protein (90 aa).

Positions 66 to 85 (QSRAAALLGIHRATLRKKLK) form a DNA-binding region, H-T-H motif.

This sequence belongs to the transcriptional regulatory Fis family.

This chain is Putative Fis-like DNA-binding protein, found in Xylella fastidiosa (strain Temecula1 / ATCC 700964).